We begin with the raw amino-acid sequence, 96 residues long: Putative membrane protein insertion efficiency factor (96 aa).

It belongs to the UPF0161 family.

It is found in the cell inner membrane. In terms of biological role, could be involved in insertion of integral membrane proteins into the membrane. The chain is Putative membrane protein insertion efficiency factor from Borreliella afzelii (strain PKo) (Borrelia afzelii).